A 642-amino-acid polypeptide reads, in one-letter code: Threonine--tRNA ligase (642 aa).

One can recognise a TGS domain in the interval 1–61 (MPIITLPDGS…TADSELAIIT (61 aa)). The tract at residues 243 to 534 (DHRKIGKQLD…LIEEYAGKFP (292 aa)) is catalytic. Cys334, His385, and His511 together coordinate Zn(2+).

The protein belongs to the class-II aminoacyl-tRNA synthetase family. Homodimer. Zn(2+) serves as cofactor.

Its subcellular location is the cytoplasm. It carries out the reaction tRNA(Thr) + L-threonine + ATP = L-threonyl-tRNA(Thr) + AMP + diphosphate + H(+). Functionally, catalyzes the attachment of threonine to tRNA(Thr) in a two-step reaction: L-threonine is first activated by ATP to form Thr-AMP and then transferred to the acceptor end of tRNA(Thr). Also edits incorrectly charged L-seryl-tRNA(Thr). The sequence is that of Threonine--tRNA ligase from Shewanella frigidimarina (strain NCIMB 400).